Here is a 330-residue protein sequence, read N- to C-terminus: Ferredoxin--NADP reductase (330 aa).

7 residues coordinate FAD: Glu35, Gln43, Tyr48, Val90, Phe123, Asp285, and Thr326.

The protein belongs to the ferredoxin--NADP reductase type 2 family. As to quaternary structure, homodimer. FAD is required as a cofactor.

The enzyme catalyses 2 reduced [2Fe-2S]-[ferredoxin] + NADP(+) + H(+) = 2 oxidized [2Fe-2S]-[ferredoxin] + NADPH. In Streptococcus pyogenes serotype M1, this protein is Ferredoxin--NADP reductase.